A 330-amino-acid polypeptide reads, in one-letter code: D-cysteine desulfhydrase (330 aa).

Lys-52 carries the post-translational modification N6-(pyridoxal phosphate)lysine.

The protein belongs to the ACC deaminase/D-cysteine desulfhydrase family. In terms of assembly, homodimer. Pyridoxal 5'-phosphate is required as a cofactor.

It carries out the reaction D-cysteine + H2O = hydrogen sulfide + pyruvate + NH4(+) + H(+). In terms of biological role, catalyzes the alpha,beta-elimination reaction of D-cysteine and of several D-cysteine derivatives. It could be a defense mechanism against D-cysteine. The polypeptide is D-cysteine desulfhydrase (Yersinia pseudotuberculosis serotype O:1b (strain IP 31758)).